We begin with the raw amino-acid sequence, 132 residues long: L-ectoine synthase (132 aa).

It belongs to the ectoine synthase family.

It catalyses the reaction (2S)-4-acetamido-2-aminobutanoate = L-ectoine + H2O. It participates in amine and polyamine biosynthesis; ectoine biosynthesis; L-ectoine from L-aspartate 4-semialdehyde: step 3/3. Functionally, catalyzes the circularization of gamma-N-acetyl-alpha,gamma-diaminobutyric acid (ADABA) to ectoine (1,4,5,6-tetrahydro-2-methyl-4-pyrimidine carboxylic acid), which is an excellent osmoprotectant. The sequence is that of L-ectoine synthase from Rhodococcus jostii (strain RHA1).